A 333-amino-acid polypeptide reads, in one-letter code: Extracellular globin (333 aa).

A signal peptide spans 1–18; sequence MHSSIVLAIVLFVAIASA. Globin domains are found at residues 25 to 167 and 174 to 318; these read CMKS…HHGR and CMNS…KHAK. Positions 82 and 114 each coordinate heme b. N-linked (GlcNAc...) asparagine glycosylation occurs at asparagine 216. Heme b-binding residues include glutamine 231 and histidine 263. The interval 314-333 is disordered; it reads DKHAKAEKDHHEGEHKEEHH.

It belongs to the globin family. Homooctamer.

The protein localises to the secreted. It is found in the extracellular space. The chain is Extracellular globin from Pseudoterranova decipiens (Sealworm).